The chain runs to 243 residues: CR(VI) reductase (243 aa).

Belongs to the flavin oxidoreductase frp family. Requires FMN as cofactor.

This Pseudomonas sp. (strain G-1) protein is CR(VI) reductase (chrR).